The primary structure comprises 264 residues: 3-methyl-2-oxobutanoate hydroxymethyltransferase (264 aa).

Residues D45 and D84 each coordinate Mg(2+). Residues 45–46, D84, and K113 contribute to the 3-methyl-2-oxobutanoate site; that span reads DS. A Mg(2+)-binding site is contributed by E115. Residue E182 is the Proton acceptor of the active site.

It belongs to the PanB family. In terms of assembly, homodecamer; pentamer of dimers. Requires Mg(2+) as cofactor.

It is found in the cytoplasm. The catalysed reaction is 3-methyl-2-oxobutanoate + (6R)-5,10-methylene-5,6,7,8-tetrahydrofolate + H2O = 2-dehydropantoate + (6S)-5,6,7,8-tetrahydrofolate. Its pathway is cofactor biosynthesis; (R)-pantothenate biosynthesis; (R)-pantoate from 3-methyl-2-oxobutanoate: step 1/2. Its function is as follows. Catalyzes the reversible reaction in which hydroxymethyl group from 5,10-methylenetetrahydrofolate is transferred onto alpha-ketoisovalerate to form ketopantoate. The chain is 3-methyl-2-oxobutanoate hydroxymethyltransferase from Helicobacter hepaticus (strain ATCC 51449 / 3B1).